We begin with the raw amino-acid sequence, 375 residues long: Putative glycyl-radical enzyme activating enzyme MJ0021 (375 aa).

The Radical SAM core domain maps to 23–246; the sequence is QCVKGGKLVL…LKVIKEFKGD (224 aa). Residues C38, C42, and C45 each contribute to the [4Fe-4S] cluster site. S-adenosyl-L-methionine is bound by residues 44 to 46 and G87; that span reads YCP.

It belongs to the organic radical-activating enzymes family. [4Fe-4S] cluster is required as a cofactor.

It catalyses the reaction glycyl-[protein] + reduced [flavodoxin] + S-adenosyl-L-methionine = glycin-2-yl radical-[protein] + semiquinone [flavodoxin] + 5'-deoxyadenosine + L-methionine + H(+). The chain is Putative glycyl-radical enzyme activating enzyme MJ0021 from Methanocaldococcus jannaschii (strain ATCC 43067 / DSM 2661 / JAL-1 / JCM 10045 / NBRC 100440) (Methanococcus jannaschii).